The following is a 97-amino-acid chain: Small ribosomal subunit protein bS6 (97 aa).

Belongs to the bacterial ribosomal protein bS6 family.

Functionally, binds together with bS18 to 16S ribosomal RNA. The protein is Small ribosomal subunit protein bS6 of Listeria monocytogenes serotype 4b (strain CLIP80459).